A 106-amino-acid polypeptide reads, in one-letter code: UPF0145 protein VC_A0951 (106 aa).

Belongs to the UPF0145 family.

This chain is UPF0145 protein VC_A0951, found in Vibrio cholerae serotype O1 (strain ATCC 39315 / El Tor Inaba N16961).